The sequence spans 526 residues: Peptide chain release factor 3 (526 aa).

The tr-type G domain occupies 9–277 (NKRRTFAIIS…DFVEYAPGPQ (269 aa)). Residues 18–25 (SHPDAGKT), 86–90 (DTPGH), and 140–143 (NKLD) each bind GTP.

This sequence belongs to the TRAFAC class translation factor GTPase superfamily. Classic translation factor GTPase family. PrfC subfamily.

The protein resides in the cytoplasm. In terms of biological role, increases the formation of ribosomal termination complexes and stimulates activities of RF-1 and RF-2. It binds guanine nucleotides and has strong preference for UGA stop codons. It may interact directly with the ribosome. The stimulation of RF-1 and RF-2 is significantly reduced by GTP and GDP, but not by GMP. The sequence is that of Peptide chain release factor 3 from Legionella pneumophila (strain Paris).